Here is a 571-residue protein sequence, read N- to C-terminus: Urease subunit alpha (571 aa).

The region spanning 133–571 (GGIDTHVHFI…LPLTQRYFLF (439 aa)) is the Urease domain. Residues H138, H140, and K221 each coordinate Ni(2+). K221 is modified (N6-carboxylysine). Residue H223 coordinates substrate. Residues H250 and H276 each coordinate Ni(2+). H324 serves as the catalytic Proton donor. D364 lines the Ni(2+) pocket.

Belongs to the metallo-dependent hydrolases superfamily. Urease alpha subunit family. As to quaternary structure, heterotrimer of UreA (gamma), UreB (beta) and UreC (alpha) subunits. Three heterotrimers associate to form the active enzyme. Ni cation serves as cofactor. In terms of processing, carboxylation allows a single lysine to coordinate two nickel ions.

The protein localises to the cytoplasm. The enzyme catalyses urea + 2 H2O + H(+) = hydrogencarbonate + 2 NH4(+). It participates in nitrogen metabolism; urea degradation; CO(2) and NH(3) from urea (urease route): step 1/1. In Staphylococcus aureus (strain bovine RF122 / ET3-1), this protein is Urease subunit alpha.